Here is a 460-residue protein sequence, read N- to C-terminus: V-type ATP synthase beta chain (460 aa).

Belongs to the ATPase alpha/beta chains family.

Produces ATP from ADP in the presence of a proton gradient across the membrane. The V-type beta chain is a regulatory subunit. This is V-type ATP synthase beta chain from Dictyoglomus turgidum (strain DSM 6724 / Z-1310).